We begin with the raw amino-acid sequence, 608 residues long: Chaperone protein HtpG (608 aa).

The a; substrate-binding stretch occupies residues 1-332 (MQFQTEVNQL…VEDLPLNVSR (332 aa)). Positions 333–536 (EILQENQILK…KNKPDFAMQQ (204 aa)) are b. The tract at residues 537 to 608 (LLKQMGQEQN…LTKIINKAFS (72 aa)) is c.

It belongs to the heat shock protein 90 family. As to quaternary structure, homodimer.

Its subcellular location is the cytoplasm. Molecular chaperone. Has ATPase activity. This Campylobacter jejuni subsp. jejuni serotype O:6 (strain 81116 / NCTC 11828) protein is Chaperone protein HtpG.